The following is a 224-amino-acid chain: Thymidine kinase (224 aa).

Residues 19-26 and 93-96 contribute to the ATP site; these read GPMFAGKT and DEVQ. Glu-94 acts as the Proton acceptor in catalysis. Zn(2+) is bound by residues Cys-150, Cys-153, Cys-188, and His-191.

It belongs to the thymidine kinase family. Homotetramer.

It localises to the cytoplasm. The enzyme catalyses thymidine + ATP = dTMP + ADP + H(+). This is Thymidine kinase from Mycoplasmoides gallisepticum (strain R(low / passage 15 / clone 2)) (Mycoplasma gallisepticum).